Reading from the N-terminus, the 398-residue chain is Probable aminomethyltransferase (398 aa).

This sequence belongs to the GcvT family. In terms of assembly, the glycine cleavage system is composed of four proteins: P, T, L and H.

The catalysed reaction is N(6)-[(R)-S(8)-aminomethyldihydrolipoyl]-L-lysyl-[protein] + (6S)-5,6,7,8-tetrahydrofolate = N(6)-[(R)-dihydrolipoyl]-L-lysyl-[protein] + (6R)-5,10-methylene-5,6,7,8-tetrahydrofolate + NH4(+). Functionally, the glycine cleavage system catalyzes the degradation of glycine. This is Probable aminomethyltransferase from Pyrococcus horikoshii (strain ATCC 700860 / DSM 12428 / JCM 9974 / NBRC 100139 / OT-3).